The chain runs to 226 residues: UPF0758 protein PSEEN5431 (226 aa).

One can recognise an MPN domain in the interval 102-224 (VMDNPLAVRR…PLSMIEHGWL (123 aa)). Residues H173, H175, and D186 each coordinate Zn(2+). A JAMM motif motif is present at residues 173–186 (HNHPSGNCEPSQDD).

The protein belongs to the UPF0758 family.

This chain is UPF0758 protein PSEEN5431, found in Pseudomonas entomophila (strain L48).